We begin with the raw amino-acid sequence, 556 residues long: Formate--tetrahydrofolate ligase (556 aa).

Residue 65–72 (TPAGEGKS) participates in ATP binding.

It belongs to the formate--tetrahydrofolate ligase family.

It catalyses the reaction (6S)-5,6,7,8-tetrahydrofolate + formate + ATP = (6R)-10-formyltetrahydrofolate + ADP + phosphate. It functions in the pathway one-carbon metabolism; tetrahydrofolate interconversion. This Streptococcus pneumoniae (strain JJA) protein is Formate--tetrahydrofolate ligase.